A 91-amino-acid polypeptide reads, in one-letter code: UPF0298 protein spyM18_0447 (91 aa).

Belongs to the UPF0298 family.

Its subcellular location is the cytoplasm. The chain is UPF0298 protein spyM18_0447 from Streptococcus pyogenes serotype M18 (strain MGAS8232).